Here is a 298-residue protein sequence, read N- to C-terminus: GTP cyclohydrolase FolE2 (298 aa).

It belongs to the GTP cyclohydrolase IV family.

It carries out the reaction GTP + H2O = 7,8-dihydroneopterin 3'-triphosphate + formate + H(+). It participates in cofactor biosynthesis; 7,8-dihydroneopterin triphosphate biosynthesis; 7,8-dihydroneopterin triphosphate from GTP: step 1/1. Converts GTP to 7,8-dihydroneopterin triphosphate. This Pseudomonas paraeruginosa (strain DSM 24068 / PA7) (Pseudomonas aeruginosa (strain PA7)) protein is GTP cyclohydrolase FolE2.